Consider the following 110-residue polypeptide: Integration host factor subunit alpha (110 aa).

Belongs to the bacterial histone-like protein family. Heterodimer of an alpha and a beta chain.

This protein is one of the two subunits of integration host factor, a specific DNA-binding protein that functions in genetic recombination as well as in transcriptional and translational control. The sequence is that of Integration host factor subunit alpha from Bdellovibrio bacteriovorus (strain ATCC 15356 / DSM 50701 / NCIMB 9529 / HD100).